The following is a 322-amino-acid chain: ATP-dependent 6-phosphofructokinase 1 (322 aa).

Gly-11 is a binding site for ATP. Position 21–25 (21–25 (RAVVR)) interacts with ADP. ATP-binding positions include 72-73 (RS) and 102-105 (GDGT). Asp-103 contacts Mg(2+). 126–128 (TID) lines the substrate pocket. The active-site Proton acceptor is Asp-128. Arg-155 contacts ADP. Residues Arg-163 and 170–172 (MGR) contribute to the substrate site. Residues 186 to 188 (GAE), Arg-212, and 214 to 216 (KKS) contribute to the ADP site. Residues Glu-223, Arg-246, and 252–255 (HIQR) each bind substrate.

The protein belongs to the phosphofructokinase type A (PFKA) family. ATP-dependent PFK group I subfamily. Prokaryotic clade 'B1' sub-subfamily. Homotetramer. Requires Mg(2+) as cofactor.

Its subcellular location is the cytoplasm. It carries out the reaction beta-D-fructose 6-phosphate + ATP = beta-D-fructose 1,6-bisphosphate + ADP + H(+). It participates in carbohydrate degradation; glycolysis; D-glyceraldehyde 3-phosphate and glycerone phosphate from D-glucose: step 3/4. Allosterically activated by ADP and other diphosphonucleosides. Allosterically inhibited by phosphoenolpyruvate which induces the dissociation of the active tetramer into an inactive two-subunit forms. In terms of biological role, catalyzes the phosphorylation of D-fructose 6-phosphate to fructose 1,6-bisphosphate by ATP, the first committing step of glycolysis. In Thermus thermophilus (strain ATCC 27634 / DSM 579 / HB8), this protein is ATP-dependent 6-phosphofructokinase 1.